Reading from the N-terminus, the 234-residue chain is Polycomb group RING finger protein 5-A (234 aa).

The RING-type zinc finger occupies 18 to 57; that stretch reads CSICRGYLIKPTAVTECLHTFCKSCIVQHFEESNECPECG. Positions 97–130 are disordered; it reads FWRKHKIKSNGEDGPRAKKSRLSGEDDDGNGGDY.

As to quaternary structure, component of a PRC1-like complex.

It localises to the nucleus. Component of Polycomb group (PcG) multiprotein complexes; the complex class is required to maintain the transcriptionally repressive state of some genes. The chain is Polycomb group RING finger protein 5-A from Danio rerio (Zebrafish).